Here is a 200-residue protein sequence, read N- to C-terminus: Holliday junction branch migration complex subunit RuvA (200 aa).

The segment at 1–64 is domain I; sequence MFAYFKGSLV…EDALQLYGFF (64 aa). Residues 65–143 are domain II; that stretch reads KEEERQLFRL…KLPLVTPAAG (79 aa). Residues 143–147 form a flexible linker region; the sequence is GKAAM. Residues 148–200 form a domain III region; the sequence is PSHHVKDDAVHALVTLGFSRLLAQKAVSALLEEKPEQSVEEVIKYALATIHNS.

The protein belongs to the RuvA family. Homotetramer. Forms an RuvA(8)-RuvB(12)-Holliday junction (HJ) complex. HJ DNA is sandwiched between 2 RuvA tetramers; dsDNA enters through RuvA and exits via RuvB. An RuvB hexamer assembles on each DNA strand where it exits the tetramer. Each RuvB hexamer is contacted by two RuvA subunits (via domain III) on 2 adjacent RuvB subunits; this complex drives branch migration. In the full resolvosome a probable DNA-RuvA(4)-RuvB(12)-RuvC(2) complex forms which resolves the HJ.

It is found in the cytoplasm. Its function is as follows. The RuvA-RuvB-RuvC complex processes Holliday junction (HJ) DNA during genetic recombination and DNA repair, while the RuvA-RuvB complex plays an important role in the rescue of blocked DNA replication forks via replication fork reversal (RFR). RuvA specifically binds to HJ cruciform DNA, conferring on it an open structure. The RuvB hexamer acts as an ATP-dependent pump, pulling dsDNA into and through the RuvAB complex. HJ branch migration allows RuvC to scan DNA until it finds its consensus sequence, where it cleaves and resolves the cruciform DNA. This chain is Holliday junction branch migration complex subunit RuvA, found in Chlorobium phaeobacteroides (strain DSM 266 / SMG 266 / 2430).